Reading from the N-terminus, the 93-residue chain is Acylphosphatase (93 aa).

An Acylphosphatase-like domain is found at Thr-5–Tyr-93. Residues Arg-20 and Asn-38 contribute to the active site.

This sequence belongs to the acylphosphatase family.

The enzyme catalyses an acyl phosphate + H2O = a carboxylate + phosphate + H(+). The polypeptide is Acylphosphatase (acyP) (Listeria monocytogenes serotype 4b (strain F2365)).